Reading from the N-terminus, the 426-residue chain is Histidine--tRNA ligase (426 aa).

This sequence belongs to the class-II aminoacyl-tRNA synthetase family. Homodimer.

The protein resides in the cytoplasm. It catalyses the reaction tRNA(His) + L-histidine + ATP = L-histidyl-tRNA(His) + AMP + diphosphate + H(+). The chain is Histidine--tRNA ligase from Corynebacterium kroppenstedtii (strain DSM 44385 / JCM 11950 / CIP 105744 / CCUG 35717).